We begin with the raw amino-acid sequence, 214 residues long: ATP synthase subunit 5, mitochondrial (214 aa).

Residues 1-24 (MFASRAIRMMSMRPMARTMATKAA) constitute a mitochondrion transit peptide.

F-type ATP synthases have 2 components, the catalytic core F(1) and the membrane-embedded component F(0), linked together by a central stalk and a peripheral stalk. The central stalk, also called rotor shaft, is often seen as part of F(1). The peripheral stalk is seen as part of F(0). F(0) contains the membrane channel next to the rotor. F-type ATP synthases form dimers but each monomer functions independently in ATP generation. The dimer consists of 17 different polypeptides: ATP1 (subunit alpha, 3 molecules per monomer, part of F(1)), ATP2 (subunit beta, 3 copies per monomer, part of F(1)), ATP3 (subunit gamma, part of the central stalk), ATP4 (subunit b, part of the peripheral stalk), ATP5/OSCP (subunit 5/OSCP, part of the peripheral stalk), ATP6 (subunit a, part of the peripheral stalk), ATP7 (subunit d, part of the peripheral stalk), ATP8 (subunit 8, part of the peripheral stalk), OLI1 (subunit c, part of the rotor, 10 molecules per monomer), ATP14 (subunit h, part of the peripheral stalk), ATP15 (subunit epsilon, part of the central stalk), ATP16 (subunit delta, part of the central stalk), ATP17 (subunit f, part of the peripheral stalk), ATP18 (subunit i/j, part of the peripheral stalk), ATP19 (subunit k, dimer-specific, at interface between monomers), ATP20 (subunit g, at interface between monomers), TIM11 (subunit e, at interface between monomers).

Its subcellular location is the mitochondrion inner membrane. Mitochondrial membrane ATP synthase (F(1)F(0) ATP synthase or Complex V) produces ATP from ADP in the presence of a proton gradient across the membrane which is generated by electron transport complexes of the respiratory chain. F-type ATP synthases consist of two structural domains, F(1) - containing the extramembraneous catalytic core, and F(0) - containing the membrane proton channel, linked together by a central stalk and a peripheral stalk. During catalysis, ATP synthesis in the catalytic domain of F(1) is coupled via a rotary mechanism of the central stalk subunits to proton translocation. Part of the complex F(0) domain and the peripheral stalk, which acts as a stator to hold the catalytic alpha/ATP1(3)beta/ATP2(3) subcomplex and subunit a/ATP6 static relative to the rotary elements. This is ATP synthase subunit 5, mitochondrial from Yarrowia lipolytica (strain CLIB 122 / E 150) (Yeast).